Reading from the N-terminus, the 639-residue chain is uncharacterized protein (639 aa).

Positions 1 to 16 are cleaved as a signal peptide; sequence MLTLYLFTATCCFVCA. Disordered stretches follow at residues 80-128 and 432-488; these read RRRA…SDKL and QTAT…TSRT. Composition is skewed to polar residues over residues 108–122 and 432–446; these read TYAT…TASP and QTAT…QQQP. Over residues 465–480 the composition is skewed to basic and acidic residues; the sequence is HGDEPHSDGELRRESH.

This is an uncharacterized protein from Human cytomegalovirus (strain Merlin) (HHV-5).